The sequence spans 553 residues: MYCVQCEQTMVTPKGNGCSFSQGMCGKTAETSDLQDLLIATLHSLSAWALKAREHNIIIHEADAFAPRAFFATLTNVNFDSARIAGYAQQALIYRNQLIKAVNEVEPNPNIDHPLANIELNGISVEQLALQAKQFALDTDRQQIGEEAHGVRLLCLYGLKGAAAYMEHAYVLDKFDNDIYAEYHGFMSWLGTQPGDLNELLEKALAIGSMNFKVMAMLDAGETEHFGNPVPAMVNVRPVKGKCILISGHDLKDLKELLEQTEGKGINVYTHGEMLPAHGYPELKKYKHLVGNFGSGWQNQQKEFARFPGAIVMTSNCLIDPNVGDYADRIFTRNIVGWPGVTHLEDHDFSPVIEKALQCDGFPYTELEHLITVGFGRKTLIDASDAVIDLVKAGKLSHVFVIGGCDGDKEERHYYTDLAYALPKDTAVLTLGCGKYRFNKLDFGTIDGGLPRLLDAGQCNDTYSAIMLAVTLSQKLGIGLNELPLSIVLSWFEQKAIIVLLTLLALGVKNVYSGPSKPAFLNDNVMALLHEKFGLSGLTTPEQDFGHIINKNL.

4 residues coordinate [2Fe-2S] cluster: C3, C6, C18, and C25. The hybrid [4Fe-2O-2S] cluster site is built by H249, E273, C317, C405, C433, C459, E493, and K495. Cysteine persulfide is present on C405.

It belongs to the HCP family. [2Fe-2S] cluster serves as cofactor. The cofactor is hybrid [4Fe-2O-2S] cluster.

Its subcellular location is the cytoplasm. It catalyses the reaction A + NH4(+) + H2O = hydroxylamine + AH2 + H(+). Functionally, catalyzes the reduction of hydroxylamine to form NH(3) and H(2)O. In Mannheimia succiniciproducens (strain KCTC 0769BP / MBEL55E), this protein is Hydroxylamine reductase.